A 178-amino-acid polypeptide reads, in one-letter code: Endothelin-2 (178 aa).

A signal peptide spans 1–24 (MVAVPTAWCSVALALLLALQEGKG). Positions 25-46 (QVAAAPDHPAPSPRARGSHLRP) are excised as a propeptide. 2 disulfide bridges follow: cysteine 49/cysteine 63 and cysteine 51/cysteine 59. Positions 70–178 (VNTPGQTAPY…RPMYPRRRKT (109 aa)) are excised as a propeptide. The interval 96 to 111 (CECSSSGDPACATFCH) is endothelin-like. The disordered stretch occupies residues 158-178 (ARQHQEAEREPRPMYPRRRKT). The span at 160–169 (QHQEAEREPR) shows a compositional bias: basic and acidic residues.

Belongs to the endothelin/sarafotoxin family.

It is found in the secreted. Its function is as follows. Endothelins are endothelium-derived vasoconstrictor peptides. In Mustela putorius furo (European domestic ferret), this protein is Endothelin-2 (EDN2).